Reading from the N-terminus, the 3456-residue chain is Genome polyprotein (3456 aa).

The 144-residue stretch at 600–743 (NVANIPLDDF…ATRLKQIQFY (144 aa)) folds into the Peptidase S30 domain. Catalysis depends on for P1 proteinase activity residues histidine 640, aspartate 652, and serine 689. Positions 1075-1196 (VWEFNEGYCY…EGEMLTYKVG (122 aa)) constitute a Peptidase C6 domain. Cysteine 1083 serves as the catalytic For helper component proteinase activity. An HAT 1 repeat occupies 1094-1126 (FINEDEMEFYKNQMNQIVLNLGAWPTFEQYLVE). Histidine 1155 acts as the For helper component proteinase activity in catalysis. A Helicase ATP-binding domain is found at 1617–1768 (NIRTSGETDV…TRHKIKVETL (152 aa)). An ATP-binding site is contributed by 1630–1637 (SGVGGGKS). The 161-residue stretch at 1787-1947 (DATSVGDVIL…GIKPVCDRVD (161 aa)) folds into the Helicase C-terminal domain. Position 2304 is an O-(5'-phospho-RNA)-tyrosine (tyrosine 2304). Residues 2412–2636 (AVDSHVGTPT…VEWSRLLPTT (225 aa)) form the Peptidase C4 domain. Active-site for nuclear inclusion protein A activity residues include histidine 2457, aspartate 2494, and cysteine 2566. An HAT 2 repeat occupies 2597-2629 (HIFEPVNETFIEMLAKMEYAKGFWKFNPELVEW). In terms of domain architecture, RdRp catalytic spans 2891 to 3011 (WVFIDCDGSR…NCPRSTANAI (121 aa)). One copy of the HAT 3 repeat lies at 3082 to 3115 (LNAAYIESFGYEDLMTEIEKFAHFWAKKHGLNDV).

VPg is uridylylated by the polymerase and is covalently attached to the 5'-end of the genomic RNA. This uridylylated form acts as a nucleotide-peptide primer for the polymerase. Post-translationally, genome polyprotein of potyviruses undergoes post-translational proteolytic processing by the main proteinase NIa-pro resulting in the production of at least ten individual proteins. The P1 proteinase and the HC-pro cleave only their respective C-termini autocatalytically. 6K1 is essential for proper proteolytic separation of P3 from CI.

It localises to the host cytoplasmic vesicle. The protein localises to the virion. It carries out the reaction RNA(n) + a ribonucleoside 5'-triphosphate = RNA(n+1) + diphosphate. It catalyses the reaction Hydrolyzes glutaminyl bonds, and activity is further restricted by preferences for the amino acids in P6 - P1' that vary with the species of potyvirus, e.g. Glu-Xaa-Xaa-Tyr-Xaa-Gln-|-(Ser or Gly) for the enzyme from tobacco etch virus. The natural substrate is the viral polyprotein, but other proteins and oligopeptides containing the appropriate consensus sequence are also cleaved.. The catalysed reaction is Hydrolyzes a Gly-|-Gly bond at its own C-terminus, commonly in the sequence -Tyr-Xaa-Val-Gly-|-Gly, in the processing of the potyviral polyprotein.. Required for aphid transmission and also has proteolytic activity. Only cleaves a Gly-Gly dipeptide at its own C-terminus. Interacts with virions and aphid stylets. Acts as a suppressor of RNA-mediated gene silencing, also known as post-transcriptional gene silencing (PTGS), a mechanism of plant viral defense that limits the accumulation of viral RNAs. May have RNA-binding activity. In terms of biological role, has helicase activity. It may be involved in replication. Its function is as follows. Indispensable for virus replication. Functionally, mediates the cap-independent, EIF4E-dependent translation of viral genomic RNAs. Binds to the cap-binding site of host EIF4E and thus interferes with the host EIF4E-dependent mRNA export and translation. VPg-RNA directly binds EIF4E and is a template for transcription. Also forms trimeric complexes with EIF4E-EIF4G, which are templates for translation. Has RNA-binding and proteolytic activities. In terms of biological role, an RNA-dependent RNA polymerase that plays an essential role in the virus replication. Its function is as follows. Involved in aphid transmission, cell-to-cell and systemis movement, encapsidation of the viral RNA and in the regulation of viral RNA amplification. This Sweet potato mild mottle virus (isolate Salazar) (SPMMV) protein is Genome polyprotein.